The sequence spans 388 residues: Protein FAM199X (388 aa).

Low complexity predominate over residues 288-312 (SMVSSASSSGSSVGNSASNSSANMS). Positions 288-358 (SMVSSASSSG…QLKEQRQARK (71 aa)) are disordered. 2 positions are modified to phosphoserine: Ser-316 and Ser-321. Over residues 330–349 (DSKKRSKQRKLQQKAFRKRQ) the composition is skewed to basic residues.

The protein belongs to the FAM199 family.

The protein is Protein FAM199X (Fam199x) of Mus musculus (Mouse).